Consider the following 550-residue polypeptide: Warthog protein 8 (550 aa).

The N-terminal stretch at 1–19 (MNYLLLVSGLLSVWQPVFG) is a signal peptide.

It belongs to the hedgehog family. In terms of processing, the C-terminal domain displays an autoproteolysis activity.

It localises to the secreted. The protein localises to the cell surface. It is found in the cell membrane. The protein resides in the extracellular space. In terms of biological role, intercellular signal essential for a variety of patterning events during development. This Caenorhabditis elegans protein is Warthog protein 8 (wrt-8).